Consider the following 865-residue polypeptide: Protein translocase subunit SecA (865 aa).

ATP-binding positions include Gln85, 103-107, and Asp505; that span reads GEGKT. Zn(2+)-binding residues include Cys847, Cys849, Cys858, and His859.

This sequence belongs to the SecA family. As to quaternary structure, monomer and homodimer. Part of the essential Sec protein translocation apparatus which comprises SecA, SecYEG and auxiliary proteins SecDF. Other proteins may also be involved. The cofactor is Zn(2+).

It localises to the cell membrane. It is found in the cytoplasm. It carries out the reaction ATP + H2O + cellular proteinSide 1 = ADP + phosphate + cellular proteinSide 2.. Its function is as follows. Part of the Sec protein translocase complex. Interacts with the SecYEG preprotein conducting channel. Has a central role in coupling the hydrolysis of ATP to the transfer of proteins into and across the cell membrane, serving as an ATP-driven molecular motor driving the stepwise translocation of polypeptide chains across the membrane. In Lactococcus lactis subsp. cremoris (strain MG1363), this protein is Protein translocase subunit SecA.